A 361-amino-acid chain; its full sequence is Probable dual-specificity RNA methyltransferase RlmN (361 aa).

Catalysis depends on E91, which acts as the Proton acceptor. Residues 97-329 (QHYGLSVCVT…KKKGVNCVVR (233 aa)) enclose the Radical SAM core domain. C104 and C340 form a disulfide bridge. Positions 111, 115, and 118 each coordinate [4Fe-4S] cluster. Residues 163-164 (GE), S195, 218-220 (SLH), and N296 each bind S-adenosyl-L-methionine. C340 functions as the S-methylcysteine intermediate in the catalytic mechanism.

The protein belongs to the radical SAM superfamily. RlmN family. The cofactor is [4Fe-4S] cluster.

The protein localises to the cytoplasm. The catalysed reaction is adenosine(2503) in 23S rRNA + 2 reduced [2Fe-2S]-[ferredoxin] + 2 S-adenosyl-L-methionine = 2-methyladenosine(2503) in 23S rRNA + 5'-deoxyadenosine + L-methionine + 2 oxidized [2Fe-2S]-[ferredoxin] + S-adenosyl-L-homocysteine. The enzyme catalyses adenosine(37) in tRNA + 2 reduced [2Fe-2S]-[ferredoxin] + 2 S-adenosyl-L-methionine = 2-methyladenosine(37) in tRNA + 5'-deoxyadenosine + L-methionine + 2 oxidized [2Fe-2S]-[ferredoxin] + S-adenosyl-L-homocysteine. Functionally, specifically methylates position 2 of adenine 2503 in 23S rRNA and position 2 of adenine 37 in tRNAs. The chain is Probable dual-specificity RNA methyltransferase RlmN from Streptococcus pneumoniae serotype 19F (strain G54).